The sequence spans 117 residues: Phosphoribosyl-ATP pyrophosphatase (117 aa).

A compositionally biased stretch (basic and acidic residues) spans 96–105 (GVSGIEEKLS). The interval 96–117 (GVSGIEEKLSRSQNQPEPTKAE) is disordered. Over residues 106-117 (RSQNQPEPTKAE) the composition is skewed to polar residues.

The protein belongs to the PRA-PH family.

It localises to the cytoplasm. The enzyme catalyses 1-(5-phospho-beta-D-ribosyl)-ATP + H2O = 1-(5-phospho-beta-D-ribosyl)-5'-AMP + diphosphate + H(+). It participates in amino-acid biosynthesis; L-histidine biosynthesis; L-histidine from 5-phospho-alpha-D-ribose 1-diphosphate: step 2/9. This chain is Phosphoribosyl-ATP pyrophosphatase, found in Nitrosomonas eutropha (strain DSM 101675 / C91 / Nm57).